Here is a 404-residue protein sequence, read N- to C-terminus: uncharacterized protein (404 aa).

A compositionally biased stretch (polar residues) spans 1 to 22 (MASSINNSSQPTVPSISNNSHG). Positions 1–110 (MASSINNSSQ…QQTPVKRRRR (110 aa)) are disordered. A Phosphothreonine modification is found at Thr47. Polar residues predominate over residues 87–104 (SRGSSLKSHLETESQQTP). Residues 117 to 166 (VDYCSACGGRGLFICCEGCPCSFHLSCLEPPLTPENIPEGSWFCVTCSIK) form a PHD-type zinc finger.

This is an uncharacterized protein from Schizosaccharomyces pombe (strain 972 / ATCC 24843) (Fission yeast).